Here is a 190-residue protein sequence, read N- to C-terminus: MAEMIEAKNLRNGQTIFGPNKEILLVLENTFNKTAMRQGIVKTKVKNLRTGAIVWLEFTGDKLEQVIIDKKKMNFLYKDGNNFVFMDQKDYSQIEINEKKLEWEKNFITEEIEVTVITYQDEILGVNLPDLVPIEVEFAEDAIQGNTANMARKKARLVTGYELDVPQFINTGDKIVIATVDGNYRERFNK.

The protein belongs to the elongation factor P family.

It is found in the cytoplasm. Its pathway is protein biosynthesis; polypeptide chain elongation. Involved in peptide bond synthesis. Stimulates efficient translation and peptide-bond synthesis on native or reconstituted 70S ribosomes in vitro. Probably functions indirectly by altering the affinity of the ribosome for aminoacyl-tRNA, thus increasing their reactivity as acceptors for peptidyl transferase. This Mycoplasma genitalium (strain ATCC 33530 / DSM 19775 / NCTC 10195 / G37) (Mycoplasmoides genitalium) protein is Elongation factor P (efp).